The following is a 473-amino-acid chain: Siroheme synthase (473 aa).

The interval 1–222 (MNTQPHHSSP…GDESRADARL (222 aa)) is precorrin-2 dehydrogenase /sirohydrochlorin ferrochelatase. NAD(+) contacts are provided by residues 37–38 (EI) and 58–59 (EK). The interval 233 to 473 (GEVWLVGAGP…QVVRHRVVSP (241 aa)) is uroporphyrinogen-III C-methyltransferase. Position 242 (proline 242) interacts with S-adenosyl-L-methionine. Aspartate 265 (proton acceptor) is an active-site residue. Lysine 287 functions as the Proton donor in the catalytic mechanism. S-adenosyl-L-methionine is bound by residues 318–320 (GGD), isoleucine 323, 348–349 (SA), methionine 401, and glycine 430.

The protein in the N-terminal section; belongs to the precorrin-2 dehydrogenase / sirohydrochlorin ferrochelatase family. It in the C-terminal section; belongs to the precorrin methyltransferase family.

The enzyme catalyses uroporphyrinogen III + 2 S-adenosyl-L-methionine = precorrin-2 + 2 S-adenosyl-L-homocysteine + H(+). The catalysed reaction is precorrin-2 + NAD(+) = sirohydrochlorin + NADH + 2 H(+). It carries out the reaction siroheme + 2 H(+) = sirohydrochlorin + Fe(2+). Its pathway is cofactor biosynthesis; adenosylcobalamin biosynthesis; precorrin-2 from uroporphyrinogen III: step 1/1. The protein operates within cofactor biosynthesis; adenosylcobalamin biosynthesis; sirohydrochlorin from precorrin-2: step 1/1. It functions in the pathway porphyrin-containing compound metabolism; siroheme biosynthesis; precorrin-2 from uroporphyrinogen III: step 1/1. It participates in porphyrin-containing compound metabolism; siroheme biosynthesis; siroheme from sirohydrochlorin: step 1/1. Its pathway is porphyrin-containing compound metabolism; siroheme biosynthesis; sirohydrochlorin from precorrin-2: step 1/1. Its function is as follows. Multifunctional enzyme that catalyzes the SAM-dependent methylations of uroporphyrinogen III at position C-2 and C-7 to form precorrin-2 via precorrin-1. Then it catalyzes the NAD-dependent ring dehydrogenation of precorrin-2 to yield sirohydrochlorin. Finally, it catalyzes the ferrochelation of sirohydrochlorin to yield siroheme. This chain is Siroheme synthase, found in Gluconobacter oxydans (strain 621H) (Gluconobacter suboxydans).